The primary structure comprises 184 residues: Signal peptidase I S (184 aa).

Residues 1 to 18 (MKSENVSKKKSILEWAKA) are Cytoplasmic-facing. The chain crosses the membrane as a helical span at residues 19–39 (IVIAVVLALLIRNFIFAPYVV). At 40–184 (DGDSMYPTLH…YPFNEMRKTN (145 aa)) the chain is on the extracellular side. Residues serine 43 and lysine 83 contribute to the active site.

This sequence belongs to the peptidase S26 family.

It is found in the cell membrane. It carries out the reaction Cleavage of hydrophobic, N-terminal signal or leader sequences from secreted and periplasmic proteins.. Functionally, not essential for cell viability, but required for efficient secretion of many proteins. This Bacillus subtilis (strain 168) protein is Signal peptidase I S (sipS).